A 122-amino-acid polypeptide reads, in one-letter code: Large ribosomal subunit protein uL14 (122 aa).

Belongs to the universal ribosomal protein uL14 family. Part of the 50S ribosomal subunit. Forms a cluster with proteins L3 and L19. In the 70S ribosome, L14 and L19 interact and together make contacts with the 16S rRNA in bridges B5 and B8.

Binds to 23S rRNA. Forms part of two intersubunit bridges in the 70S ribosome. The protein is Large ribosomal subunit protein uL14 of Mycoplasmopsis pulmonis (strain UAB CTIP) (Mycoplasma pulmonis).